Here is a 304-residue protein sequence, read N- to C-terminus: Ribonuclease Z (304 aa).

Positions 63, 65, 67, 68, 143, 213, and 271 each coordinate Zn(2+). Asp67 serves as the catalytic Proton acceptor.

This sequence belongs to the RNase Z family. In terms of assembly, homodimer. Requires Zn(2+) as cofactor.

The enzyme catalyses Endonucleolytic cleavage of RNA, removing extra 3' nucleotides from tRNA precursor, generating 3' termini of tRNAs. A 3'-hydroxy group is left at the tRNA terminus and a 5'-phosphoryl group is left at the trailer molecule.. Functionally, zinc phosphodiesterase, which displays some tRNA 3'-processing endonuclease activity. Probably involved in tRNA maturation, by removing a 3'-trailer from precursor tRNA. This Bacteroides fragilis (strain YCH46) protein is Ribonuclease Z.